The following is a 536-amino-acid chain: Chromosomal replication initiator protein DnaA (536 aa).

The domain I, interacts with DnaA modulators stretch occupies residues 1 to 72 (MNDFWQHCSA…DLARDFWNAP (72 aa)). The interval 72–199 (PIEVQFVLDP…EAADSMYERS (128 aa)) is domain II. A disordered region spans residues 97–121 (RAPLPAANPAPVTAGPAPSGAADAN). Positions 105 to 121 (PAPVTAGPAPSGAADAN) are enriched in low complexity. Positions 200-416 (KLNPVLTFDN…GALRKILAYS (217 aa)) are domain III, AAA+ region. Glycine 244, glycine 246, lysine 247, and threonine 248 together coordinate ATP. The segment at 417 to 536 (KFHGREITIE…LHVLEQTLKG (120 aa)) is domain IV, binds dsDNA.

This sequence belongs to the DnaA family. In terms of assembly, oligomerizes as a right-handed, spiral filament on DNA at oriC.

It is found in the cytoplasm. In terms of biological role, plays an essential role in the initiation and regulation of chromosomal replication. ATP-DnaA binds to the origin of replication (oriC) to initiate formation of the DNA replication initiation complex once per cell cycle. Binds the DnaA box (a 9 base pair repeat at the origin) and separates the double-stranded (ds)DNA. Forms a right-handed helical filament on oriC DNA; dsDNA binds to the exterior of the filament while single-stranded (ss)DNA is stabiized in the filament's interior. The ATP-DnaA-oriC complex binds and stabilizes one strand of the AT-rich DNA unwinding element (DUE), permitting loading of DNA polymerase. After initiation quickly degrades to an ADP-DnaA complex that is not apt for DNA replication. Binds acidic phospholipids. In Burkholderia thailandensis (strain ATCC 700388 / DSM 13276 / CCUG 48851 / CIP 106301 / E264), this protein is Chromosomal replication initiator protein DnaA.